Consider the following 124-residue polypeptide: Small ribosomal subunit protein uS13 (124 aa).

A disordered region spans residues 95–124 (GLPVRGQRTKTNARTRKGPKRTIAGKKKAK).

The protein belongs to the universal ribosomal protein uS13 family. In terms of assembly, part of the 30S ribosomal subunit. Forms a loose heterodimer with protein S19. Forms two bridges to the 50S subunit in the 70S ribosome.

Functionally, located at the top of the head of the 30S subunit, it contacts several helices of the 16S rRNA. In the 70S ribosome it contacts the 23S rRNA (bridge B1a) and protein L5 of the 50S subunit (bridge B1b), connecting the 2 subunits; these bridges are implicated in subunit movement. Contacts the tRNAs in the A and P-sites. This is Small ribosomal subunit protein uS13 from Rhodococcus erythropolis (strain PR4 / NBRC 100887).